We begin with the raw amino-acid sequence, 219 residues long: UPF0502 protein GSU0233 (219 aa).

Belongs to the UPF0502 family.

The chain is UPF0502 protein GSU0233 from Geobacter sulfurreducens (strain ATCC 51573 / DSM 12127 / PCA).